The chain runs to 308 residues: Uridine diphosphate glucose pyrophosphatase NUDT22 (308 aa).

Substrate contacts are provided by Phe56, Tyr86, Arg138, Ala143, Asp150, His155, and Glu157. The Nudix hydrolase domain maps to 117–284 (ADPLGVGAAL…KGAILLYNRH (168 aa)). The Nudix box signature appears at 174–195 (GLLVVRELFSSVLQEICDEVNL). Mg(2+) contacts are provided by Glu188 and Glu192. Ser273 is a binding site for substrate.

It belongs to the Nudix hydrolase family. The cofactor is Mg(2+).

It carries out the reaction UDP-sugar + H2O = UMP + alpha-D-aldose 1-phosphate.. Hydrolyzes UDP-glucose to glucose 1-phosphate and UMP and UDP-galactose to galactose 1-phosphate and UMP. Preferred substrate is UDP-glucose. The polypeptide is Uridine diphosphate glucose pyrophosphatase NUDT22 (Nudt22) (Mus musculus (Mouse)).